A 507-amino-acid polypeptide reads, in one-letter code: ATP synthase subunit alpha, chloroplastic (507 aa).

170–177 (GDRQTGKT) provides a ligand contact to ATP.

This sequence belongs to the ATPase alpha/beta chains family. As to quaternary structure, F-type ATPases have 2 components, CF(1) - the catalytic core - and CF(0) - the membrane proton channel. CF(1) has five subunits: alpha(3), beta(3), gamma(1), delta(1), epsilon(1). CF(0) has four main subunits: a, b, b' and c.

It localises to the plastid. The protein localises to the chloroplast thylakoid membrane. The enzyme catalyses ATP + H2O + 4 H(+)(in) = ADP + phosphate + 5 H(+)(out). In terms of biological role, produces ATP from ADP in the presence of a proton gradient across the membrane. The alpha chain is a regulatory subunit. This Oenothera glazioviana (Large-flowered evening primrose) protein is ATP synthase subunit alpha, chloroplastic.